We begin with the raw amino-acid sequence, 510 residues long: Serine/threonine-protein kinase UL13 homolog (510 aa).

Residues 1 to 63 (MDADDTPPNL…WANPSTATCM (63 aa)) form a disordered region. The Protein kinase domain occupies 132-458 (RDRPRFAGRG…RRIFQCHAVR (327 aa)). ATP is bound by residues 138–146 (AGRGTYGRV) and Lys-157. Asp-257 acts as the Proton acceptor in catalysis.

It belongs to the protein kinase superfamily. Ser/Thr protein kinase family. Autophosphorylated.

It localises to the virion tegument. Its subcellular location is the host nucleus. It carries out the reaction L-seryl-[protein] + ATP = O-phospho-L-seryl-[protein] + ADP + H(+). The catalysed reaction is L-threonyl-[protein] + ATP = O-phospho-L-threonyl-[protein] + ADP + H(+). Functionally, multifunctional serine/threonine kinase that plays a role in several processes including egress of virus particles from the nucleus, modulation of the actin cytoskeleton and regulation of viral and cellular gene expression. Regulates the nuclear localization of viral envelopment factor proteins 24 and 27, by phosphorylating the protein kinase ORF66, indicating a role in nuclear egress. Disrupts host nuclear lamins, including LMNA and LMNB1. Phosphorylates the viral Fc receptor composed of glycoproteins E (gE) and I (gI). Phosphorylation of glycoprotein E (gE) by UL13 alters its subcellular localization, from the host early endosome to the plasma membrane. Participates in the transcriptional regulation of cellular and viral mRNAs mainly by phosphorylating the viral transcriptional regulator IE63. The sequence is that of Serine/threonine-protein kinase UL13 homolog from Varicella-zoster virus (strain Dumas) (HHV-3).